We begin with the raw amino-acid sequence, 710 residues long: MSKQTFTTTFAGKPLVVEVGQVAKQANGATVVRYGDSTVLTAAVMSKKMATGDFFPLQVNYEEKMYAAGKFPGGFMKREGRPSTDATLTARLIDRPIRPMFAEGFRNEVQVINTVLSYDENASAPMAAMFGSSLALSISDIPFNGPIAGVQVGYIDGEFIINPDKEQMEASLLELTVAGSKEAINMVESGAKELSEDIMLEALLKGHQAIQELIAFQEQIVAVVGKEKAEVELLQVDVDLQADIVAKYNAQLQKAVQVEEKKAREAATEAVKEMVKAEYEERYAEDENLATIMRDVAEILEQMEHAEVRRLITEDKIRPDGRKIDEIRPLDAVVDFLPKVHGSGLFTRGQTQALSVLTLAPMGETQIIDGLAPEYKKRFLHHYNFPQYSVGETGRYGAAGRREIGHGALGERALEQVLPSLEEFPYAIRLVAEVLESNGSSSQASICAGTLALMAGGVPIKAPVAGIAMGLISDGTNYTVLTDIQGLEDHFGDMDFKVAGTREGITALQMDIKIAGITPQILEEALAQAKKARFEILDVIEATIAEPRPELAPTAPKIDTIKIDVDKIKVVIGKGGETIDKIIAETGVKIDIDDEGNVSIYSSDQAAIDRTKEIIAGLVREAKVGEVYHAKVVRIEKFGAFVNLFDKTDALVHISEIAWTRTTNVSDVLEVGEDVDVKVIKIDEKGRVDASMKALIPRPPKPEKKEEKHD.

Positions 489 and 495 each coordinate Mg(2+). The region spanning 556–615 (PKIDTIKIDVDKIKVVIGKGGETIDKIIAETGVKIDIDDEGNVSIYSSDQAAIDRTKEII) is the KH domain. An S1 motif domain is found at 625-693 (GEVYHAKVVR…EKGRVDASMK (69 aa)). The disordered stretch occupies residues 691–710 (SMKALIPRPPKPEKKEEKHD). A compositionally biased stretch (basic and acidic residues) spans 700–710 (PKPEKKEEKHD).

The protein belongs to the polyribonucleotide nucleotidyltransferase family. Mg(2+) serves as cofactor.

It is found in the cytoplasm. The catalysed reaction is RNA(n+1) + phosphate = RNA(n) + a ribonucleoside 5'-diphosphate. Its function is as follows. Involved in mRNA degradation. Catalyzes the phosphorolysis of single-stranded polyribonucleotides processively in the 3'- to 5'-direction. The protein is Polyribonucleotide nucleotidyltransferase of Streptococcus pyogenes serotype M1.